The chain runs to 173 residues: Transcriptional repressor NrdR (173 aa).

A zinc finger spans residues 3 to 34 (CPFCQHADTRVIDSRVSEDGATIRRRRECEAC). An ATP-cone domain is found at 49-139 (PAIVKSDGTR…VYRSFEDVAD (91 aa)).

It belongs to the NrdR family. Requires Zn(2+) as cofactor.

Functionally, negatively regulates transcription of bacterial ribonucleotide reductase nrd genes and operons by binding to NrdR-boxes. This Stenotrophomonas maltophilia (strain R551-3) protein is Transcriptional repressor NrdR.